An 898-amino-acid chain; its full sequence is Fasciclin-2 (898 aa).

The first 22 residues, M1–A22, serve as a signal peptide directing secretion. Residues Q23–S764 are Extracellular-facing. 5 consecutive Ig-like C2-type domains span residues P31–S124, P134–R219, P226–T316, P321–M423, and P428–R525. N-linked (GlcNAc...) asparagine glycans are attached at residues N35, N51, N149, N192, N297, and N328. C48 and C113 are oxidised to a cystine. 2 disulfide bridges follow: C156–C203 and C248–C300. A disulfide bridge links C343 with C407. Residues N447, N457, and N580 are each glycosylated (N-linked (GlcNAc...) asparagine). C450 and C509 are disulfide-bonded. Fibronectin type-III domains are found at residues A532–I626 and G644–P745. Residues A765–V782 traverse the membrane as a helical segment. Residues D783 to V898 are Cytoplasmic-facing.

Its subcellular location is the membrane. In terms of biological role, neuronal recognition molecule. Involved in a pathway recognition for axons during the development of nerve fascicles. This chain is Fasciclin-2 (FAS2), found in Schistocerca americana (American grasshopper).